The chain runs to 98 residues: Integration host factor subunit alpha (98 aa).

The segment at 49–71 (FGNFDLRDKNQRPGRNPKTGEDI) is disordered.

This sequence belongs to the bacterial histone-like protein family. In terms of assembly, heterodimer of an alpha and a beta chain.

In terms of biological role, this protein is one of the two subunits of integration host factor, a specific DNA-binding protein that functions in genetic recombination as well as in transcriptional and translational control. The protein is Integration host factor subunit alpha of Shewanella amazonensis (strain ATCC BAA-1098 / SB2B).